The sequence spans 944 residues: snRNA-activating protein complex subunit 4 homolog (944 aa).

The segment at 1–22 is disordered; it reads MSDLVMFEPGASTSTDVPTNTD. Over residues 11–22 the composition is skewed to polar residues; that stretch reads ASTSTDVPTNTD. Positions 177 to 244 constitute a Myb-like 1 domain; that stretch reads TSNFDRRQWT…AVKSKWYNEL (68 aa). In terms of domain architecture, HTH myb-type 1 spans 245–301; it reads NPKWNKEHWSNEEVEKLKYLRESPKFVSWPMLALNLGTNRTSYQCMEKYKTEVSQHS. The H-T-H motif DNA-binding region spans 273–297; it reads WPMLALNLGTNRTSYQCMEKYKTEV. Residues 304 to 350 form the Myb-like 2 domain; sequence WSQDEDTKLIALTKITSINGHIQWDKVAQCMPGRTRQQVRTRFSHTL. HTH myb-type domains follow at residues 351 to 406 and 407 to 459; these read DASV…NRSA and HVNE…AAKL. 2 DNA-binding regions (H-T-H motif) span residues 379–402 and 432–455; these read WAKV…TNVL and WAKC…LQLI. Positions 911–921 are enriched in low complexity; the sequence is ARPARPPRSSA. A disordered region spans residues 911–935; the sequence is ARPARPPRSSAGTPTPSHVSIDTES. Over residues 922–935 the composition is skewed to polar residues; the sequence is GTPTPSHVSIDTES.

In terms of tissue distribution, broadly expressed in all tissues, including head, vulva and tail.

It localises to the nucleus. Its function is as follows. Binds to the promoter regions of RNA polymerase II and III small-nuclear RNA genes, type 3 RNA polymerase III non-coding RNA genes, small nucleolar RNAs and transfer RNA genes. Required for expression of mature 21U-RNAs. The sequence is that of snRNA-activating protein complex subunit 4 homolog from Caenorhabditis elegans.